Reading from the N-terminus, the 699-residue chain is Mannan-binding lectin serine protease 1 (699 aa).

Positions 1-19 are cleaved as a signal peptide; that stretch reads MRWLLLYYALCFSLSKASA. The CUB 1 domain maps to 20 to 138; that stretch reads HTVELNNMFG…TGFDAHYMAV (119 aa). The homodimerization stretch occupies residues 20–184; it reads HTVELNNMFG…HTDNRTCRVE (165 aa). The tract at residues 20-184 is interaction with MBL2; that stretch reads HTVELNNMFG…HTDNRTCRVE (165 aa). The tract at residues 20–278 is interaction with FCN2; the sequence is HTVELNNMFG…STQSHSVLIL (259 aa). N-linked (GlcNAc...) asparagine glycosylation is present at Asn49. Ca(2+)-binding residues include Glu68, Asp76, Asp121, Ser123, Asp139, Val140, and Glu142. The cysteines at positions 73 and 91 are disulfide-linked. In terms of domain architecture, EGF-like; calcium-binding spans 139 to 182; sequence DVDECKEREDEELSCDHYCHNYIGGYYCSCRFGYILHTDNRTCR. Intrachain disulfides connect Cys143-Cys157, Cys153-Cys166, Cys168-Cys181, and Cys185-Cys212. Ca(2+) is bound by residues Asn159, Tyr160, and Gly163. Asn159 is modified ((3R)-3-hydroxyasparagine). Residue Asn178 is glycosylated (N-linked (GlcNAc...) (complex) asparagine). The 113-residue stretch at 185 to 297 folds into the CUB 2 domain; it reads CSDNLFTQRT…RGWRLSYRAA (113 aa). Ca(2+) is bound by residues Glu235, Asp245, Asp282, and Ser284. An intrachain disulfide couples Cys242 to Cys260. 2 Sushi domains span residues 299-364 and 365-434; these read NECP…TCKI and VDCR…TCLP. 6 disulfide bridges follow: Cys301–Cys349, Cys329–Cys362, Cys367–Cys414, Cys397–Cys432, Cys436–Cys572, and Cys475–Cys491. Residue Asn385 is glycosylated (N-linked (GlcNAc...) (complex) asparagine). N-linked (GlcNAc...) asparagine glycosylation is present at Asn407. A Peptidase S1 domain is found at 449 to 696; it reads IFNGRPAQKG…NKDWIQRVTG (248 aa). His490 functions as the Charge relay system in the catalytic mechanism. The N-linked (GlcNAc) asparagine glycan is linked to Leu533. Asp552 serves as the catalytic Charge relay system. Glu599 carries an N-linked (GlcNAc) asparagine glycan. Disulfide bonds link Cys614–Cys631 and Cys642–Cys672. Ser646 functions as the Charge relay system in the catalytic mechanism.

It belongs to the peptidase S1 family. In terms of assembly, homodimer. Interacts with the oligomeric lectins MBL2, FCN2 and FCN3; triggers the lectin pathway of complement through activation of C3. Interacts with SERPING1. Interacts with COLEC11; probably triggers the lectin pathway of complement. In terms of processing, the iron and 2-oxoglutarate dependent 3-hydroxylation of aspartate and asparagine is (R) stereospecific within EGF domains. Post-translationally, N-glycosylated. Some N-linked glycan are of the complex-type. Autoproteolytic processing of the proenzyme produces the active enzyme composed on the heavy and the light chain held together by a disulfide bond. Isoform 1 but not isoform 2 is activated through autoproteolytic processing. As to expression, protein of the plasma which is primarily expressed by liver.

It localises to the secreted. Its activity is regulated as follows. Inhibited by SERPING1 and A2M. Functionally, functions in the lectin pathway of complement, which performs a key role in innate immunity by recognizing pathogens through patterns of sugar moieties and neutralizing them. The lectin pathway is triggered upon binding of mannan-binding lectin (MBL) and ficolins to sugar moieties which leads to activation of the associated proteases MASP1 and MASP2. Functions as an endopeptidase and may activate MASP2 or C2 or directly activate C3 the key component of complement reaction. Isoform 2 may have an inhibitory effect on the activation of the lectin pathway of complement or may cleave IGFBP5. Also plays a role in development. The polypeptide is Mannan-binding lectin serine protease 1 (MASP1) (Homo sapiens (Human)).